Here is an 889-residue protein sequence, read N- to C-terminus: Phosphofurin acidic cluster sorting protein 2 (889 aa).

Disordered stretches follow at residues aspartate 180–threonine 246, leucine 293–arginine 463, and serine 687–valine 740. Residues serine 343–arginine 358 show a composition bias toward basic and acidic residues. Residues serine 390, serine 416, serine 453, serine 691, and serine 694 each carry the phosphoserine modification. 2 stretches are compositionally biased toward low complexity: residues serine 687 to serine 720 and proline 727 to serine 737.

This sequence belongs to the PACS family. As to quaternary structure, interacts with BID and PKD2. Interacts with SIRT1. Interacts with HDAC1. Interacts with TRPV1. Interacts with WDR37. (Microbial infection) Interacts with HIV-1 Nef. In terms of tissue distribution, broadly expressed, with greatest levels in skeletal muscle followed by heart, brain, pancreas and testis.

The protein resides in the endoplasmic reticulum. It is found in the mitochondrion. In terms of biological role, multifunctional sorting protein that controls the endoplasmic reticulum (ER)-mitochondria communication, including the apposition of mitochondria with the ER and ER homeostasis. In addition, in response to apoptotic inducer, translocates BIB to mitochondria, which initiates a sequence of events including the formation of mitochondrial truncated BID, the release of cytochrome c, the activation of caspase-3 thereby causing cell death. May also be involved in ion channel trafficking, directing acidic cluster-containing ion channels to distinct subcellular compartments. The polypeptide is Phosphofurin acidic cluster sorting protein 2 (Homo sapiens (Human)).